Here is a 225-residue protein sequence, read N- to C-terminus: uncharacterized protein (225 aa).

The signal sequence occupies residues Met-1 to Ala-21.

In terms of tissue distribution, prismatic layer of shell (at protein level).

It is found in the secreted. This is an uncharacterized protein from Margaritifera margaritifera (Freshwater pearl mussel).